Here is a 464-residue protein sequence, read N- to C-terminus: Probable 3-ketoacyl-CoA synthase 21 (464 aa).

A helical membrane pass occupies residues 21–41 (LLSSGVSVFEIFAGLLVVHLI). Residues 42 to 333 (YQRIRTRVKV…VIQHILCKKL (292 aa)) form the FAE domain. Catalysis depends on residues C187, H352, H356, H385, and N389.

This sequence belongs to the thiolase-like superfamily. Chalcone/stilbene synthases family. As to expression, expressed in flowers.

Its subcellular location is the membrane. It catalyses the reaction a very-long-chain acyl-CoA + malonyl-CoA + H(+) = a very-long-chain 3-oxoacyl-CoA + CO2 + CoA. It functions in the pathway lipid metabolism; fatty acid biosynthesis. This Arabidopsis thaliana (Mouse-ear cress) protein is Probable 3-ketoacyl-CoA synthase 21.